The chain runs to 415 residues: Gamma-glutamyl phosphate reductase (415 aa).

It belongs to the gamma-glutamyl phosphate reductase family.

The protein resides in the cytoplasm. The enzyme catalyses L-glutamate 5-semialdehyde + phosphate + NADP(+) = L-glutamyl 5-phosphate + NADPH + H(+). It participates in amino-acid biosynthesis; L-proline biosynthesis; L-glutamate 5-semialdehyde from L-glutamate: step 2/2. Catalyzes the NADPH-dependent reduction of L-glutamate 5-phosphate into L-glutamate 5-semialdehyde and phosphate. The product spontaneously undergoes cyclization to form 1-pyrroline-5-carboxylate. The polypeptide is Gamma-glutamyl phosphate reductase (Bacillus cereus (strain B4264)).